Reading from the N-terminus, the 481-residue chain is MADKITSRSQDYSQWYIDLVRSAKLADYSDVRGCMVIRPNGYAIWEKMQAALDAMFKETGHVNAYFPLFIPESYIAKEAEHIEGFAPECAVVTHGGGEELAEKLYVRPTSETIIWASYKKWIQSYRDLPILINQWANVVRWEMRTRLFLRTTEFLWQEGHTAHATKEEASEEVLRMITIYKKFAEEYMALPVIMGRKTESEKFAGADETFCIEAMMQDGKALQAGTSHHLGQNFAKAFDCQFQTSAGELDFVWATSWGVSTRLIGALIMAHSDDRGLVLPPKLASRQVVVIPILRGDKTAVLEQADAIVCTLKKHGIPAFVDSSDQNSPGWKFAEYELQGIPLRIELGPRDLAGKKCVVARRDTLEKTELPLDDTFSMQVSEILNSIQQNLYDRALSFRNEKTVEVKSYEEFKTAVENGFVIAHWDGTDETESKIKEETKATIRVLPEEQEYLDRYTMMEPGVCIYSGRPAARKVVFAKAY.

Belongs to the class-II aminoacyl-tRNA synthetase family. ProS type 3 subfamily. As to quaternary structure, homodimer.

It is found in the cytoplasm. It catalyses the reaction tRNA(Pro) + L-proline + ATP = L-prolyl-tRNA(Pro) + AMP + diphosphate. Its function is as follows. Catalyzes the attachment of proline to tRNA(Pro) in a two-step reaction: proline is first activated by ATP to form Pro-AMP and then transferred to the acceptor end of tRNA(Pro). The protein is Proline--tRNA ligase of Chlorobium limicola (strain DSM 245 / NBRC 103803 / 6330).